The primary structure comprises 190 residues: E3 ubiquitin-protein ligase RNF4 (190 aa).

The required for ubiquitination activity stretch occupies residues Met1–Ala16. A disordered region spans residues Met1–Ile29. A mediates interaction with TRPS1 region spans residues Arg4–Leu61. 4 consecutive short sequence motifs (SUMO interaction motif) follow at residues Ile36 to Val39, Ile46 to Leu49, Val57 to Val59, and Val67 to Val70. Phosphoserine is present on residues Ser94 and Ser95. Zn(2+) contacts are provided by Cys132, Cys135, Cys154, His156, Cys159, Cys162, Cys173, and Cys176. The RING-type zinc finger occupies Cys132–Arg177.

Homodimer (via RING-type zinc finger domain). Interacts with GSC2. Interacts with AR/the androgen receptor and TBP. Interacts with TCF20. Interacts with PATZ1. Interacts with TRPS1; negatively regulates TRPS1 transcriptional repressor activity. Interacts with PML (isoform PML-1, isoform PML-2, isoform PML-3, isoform PML-4, isoform PML-5 and isoform PML-6). Interacts with PRDM1/Blimp-1. Sumoylated; conjugated by one or two SUMO1 moieties. Post-translationally, autoubiquitinated. Widely expressed at low levels in many tissues; highly expressed in testis.

It is found in the cytoplasm. The protein resides in the nucleus. It localises to the PML body. The enzyme catalyses S-ubiquitinyl-[E2 ubiquitin-conjugating enzyme]-L-cysteine + [acceptor protein]-L-lysine = [E2 ubiquitin-conjugating enzyme]-L-cysteine + N(6)-ubiquitinyl-[acceptor protein]-L-lysine.. It participates in protein modification; protein ubiquitination. E3 ubiquitin-protein ligase which binds polysumoylated chains covalently attached to proteins and mediates 'Lys-6'-, 'Lys-11'-, 'Lys-48'- and 'Lys-63'-linked polyubiquitination of those substrates and their subsequent targeting to the proteasome for degradation. Regulates the degradation of several proteins including PML and the transcriptional activator PEA3. Involved in chromosome alignment and spindle assembly, it regulates the kinetochore CENPH-CENPI-CENPK complex by targeting polysumoylated CENPI to proteasomal degradation. Regulates the cellular responses to hypoxia and heat shock through degradation of respectively EPAS1 and PARP1. Alternatively, it may also bind DNA/nucleosomes and have a more direct role in the regulation of transcription for instance enhancing basal transcription and steroid receptor-mediated transcriptional activation. Catalyzes ubiquitination of sumoylated PARP1 in response to PARP1 trapping to chromatin, leading to PARP1 removal from chromatin by VCP/p97. This chain is E3 ubiquitin-protein ligase RNF4, found in Homo sapiens (Human).